The sequence spans 379 residues: Protein RecA (379 aa).

79 to 86 is an ATP binding site; the sequence is GPESSGKT.

Belongs to the RecA family.

The protein resides in the cytoplasm. Can catalyze the hydrolysis of ATP in the presence of single-stranded DNA, the ATP-dependent uptake of single-stranded DNA by duplex DNA, and the ATP-dependent hybridization of homologous single-stranded DNAs. It interacts with LexA causing its activation and leading to its autocatalytic cleavage. In Streptococcus agalactiae, this protein is Protein RecA.